We begin with the raw amino-acid sequence, 129 residues long: Class I hydrophobin 11 (129 aa).

Positions 1 to 19 are cleaved as a signal peptide; the sequence is MRLTPLLAALALPLLTVLA. 4 disulfide bridges follow: cysteine 48/cysteine 106, cysteine 55/cysteine 100, cysteine 56/cysteine 89, and cysteine 107/cysteine 122.

This sequence belongs to the fungal hydrophobin family. Self-assembles to form functional amyloid fibrils called rodlets. Self-assembly into fibrillar rodlets occurs spontaneously at hydrophobic:hydrophilic interfaces and the rodlets further associate laterally to form amphipathic monolayers.

The protein resides in the secreted. It localises to the cell wall. Aerial growth, conidiation, and dispersal of filamentous fungi in the environment rely upon a capability of their secreting small amphipathic proteins called hydrophobins (HPBs) with low sequence identity. Class I can self-assemble into an outermost layer of rodlet bundles on aerial cell surfaces, conferring cellular hydrophobicity that supports fungal growth, development and dispersal; whereas Class II form highly ordered films at water-air interfaces through intermolecular interactions but contribute nothing to the rodlet structure. This Pleurotus ostreatus (strain PC15) (Oyster mushroom) protein is Class I hydrophobin 11.